A 502-amino-acid polypeptide reads, in one-letter code: Protein nucleotidyltransferase YdiU (502 aa).

8 residues coordinate ATP: Gly-98, Gly-100, Arg-101, Lys-121, Asp-133, Gly-134, Arg-184, and Arg-191. The active-site Proton acceptor is Asp-260. Mg(2+) contacts are provided by Asn-261 and Asp-270. Asp-270 provides a ligand contact to ATP.

This sequence belongs to the SELO family. It depends on Mg(2+) as a cofactor. Mn(2+) serves as cofactor.

It catalyses the reaction L-seryl-[protein] + ATP = 3-O-(5'-adenylyl)-L-seryl-[protein] + diphosphate. It carries out the reaction L-threonyl-[protein] + ATP = 3-O-(5'-adenylyl)-L-threonyl-[protein] + diphosphate. The enzyme catalyses L-tyrosyl-[protein] + ATP = O-(5'-adenylyl)-L-tyrosyl-[protein] + diphosphate. The catalysed reaction is L-histidyl-[protein] + UTP = N(tele)-(5'-uridylyl)-L-histidyl-[protein] + diphosphate. It catalyses the reaction L-seryl-[protein] + UTP = O-(5'-uridylyl)-L-seryl-[protein] + diphosphate. It carries out the reaction L-tyrosyl-[protein] + UTP = O-(5'-uridylyl)-L-tyrosyl-[protein] + diphosphate. Functionally, nucleotidyltransferase involved in the post-translational modification of proteins. It can catalyze the addition of adenosine monophosphate (AMP) or uridine monophosphate (UMP) to a protein, resulting in modifications known as AMPylation and UMPylation. This chain is Protein nucleotidyltransferase YdiU, found in Rhizobium rhizogenes (strain K84 / ATCC BAA-868) (Agrobacterium radiobacter).